Here is a 77-residue protein sequence, read N- to C-terminus: Acyl carrier protein (77 aa).

One can recognise a Carrier domain in the interval 2–77; it reads SAIDKRVKEI…DAIDYITEHT (76 aa). Residue S37 is modified to O-(pantetheine 4'-phosphoryl)serine.

It belongs to the acyl carrier protein (ACP) family. 4'-phosphopantetheine is transferred from CoA to a specific serine of apo-ACP by AcpS. This modification is essential for activity because fatty acids are bound in thioester linkage to the sulfhydryl of the prosthetic group.

The protein localises to the cytoplasm. The protein operates within lipid metabolism; fatty acid biosynthesis. In terms of biological role, carrier of the growing fatty acid chain in fatty acid biosynthesis. The protein is Acyl carrier protein of Geobacter metallireducens (strain ATCC 53774 / DSM 7210 / GS-15).